A 393-amino-acid polypeptide reads, in one-letter code: Putative serpin-Z6A (393 aa).

Residues 336-360 (GTEAAAATAVLMEGAARYAPPPPPR) form an RCL region.

Belongs to the serpin family.

In terms of biological role, probable serine protease inhibitor. This Oryza sativa subsp. japonica (Rice) protein is Putative serpin-Z6A.